The following is a 264-amino-acid chain: uncharacterized protein (264 aa).

This is an uncharacterized protein from Shigella flexneri.